The primary structure comprises 247 residues: tRNA pseudouridine synthase A 1 (247 aa).

The Nucleophile role is filled by Asp53. Tyr111 lines the substrate pocket.

This sequence belongs to the tRNA pseudouridine synthase TruA family. In terms of assembly, homodimer.

The catalysed reaction is uridine(38/39/40) in tRNA = pseudouridine(38/39/40) in tRNA. Formation of pseudouridine at positions 38, 39 and 40 in the anticodon stem and loop of transfer RNAs. The sequence is that of tRNA pseudouridine synthase A 1 from Bacillus cereus (strain ATCC 14579 / DSM 31 / CCUG 7414 / JCM 2152 / NBRC 15305 / NCIMB 9373 / NCTC 2599 / NRRL B-3711).